We begin with the raw amino-acid sequence, 190 residues long: Putative glutathione-dependent formaldehyde-activating enzyme (190 aa).

The CENP-V/GFA domain maps to 19-165 (FKGGKLYCHC…FRKVGLQPYD (147 aa)). Residues Cys-26, Cys-28, Cys-47, Cys-49, Cys-52, Cys-94, and Cys-97 each contribute to the Zn(2+) site.

It belongs to the Gfa family. Zn(2+) is required as a cofactor.

It carries out the reaction S-(hydroxymethyl)glutathione = glutathione + formaldehyde. It participates in one-carbon metabolism; formaldehyde degradation; formate from formaldehyde (glutathione route): step 1/3. Catalyzes the condensation of formaldehyde and glutathione to S-hydroxymethylglutathione. The chain is Putative glutathione-dependent formaldehyde-activating enzyme from Pyrenophora teres f. teres (strain 0-1) (Barley net blotch fungus).